Reading from the N-terminus, the 142-residue chain is Hemoglobin subunit alpha 1 (142 aa).

Ser1 carries the post-translational modification N-acetylserine. Residues 1–142 enclose the Globin domain; that stretch reads SLSDKDKAAV…VSLALSERYR (142 aa). An O2-binding site is contributed by His59. Residue His88 coordinates heme b.

This sequence belongs to the globin family. In terms of assembly, hb1 is a heterotetramer of two alpha-1 chains and two beta-1 chains. Hb2 is a heterotetramer of two alpha-2 chains and two beta-1 chains. HbC is a heterotetramer of two alpha-1 chains and two beta-2 chains. In terms of tissue distribution, red blood cells.

Involved in oxygen transport from gills to the various peripheral tissues. This is Hemoglobin subunit alpha 1 from Eleginops maclovinus (Patagonian blennie).